The chain runs to 125 residues: Putative superoxide reductase (125 aa).

Glu-12, His-14, His-40, His-46, Cys-110, and His-113 together coordinate Fe cation.

This sequence belongs to the desulfoferrodoxin family. Requires Fe cation as cofactor.

The catalysed reaction is reduced [rubredoxin] + superoxide + 2 H(+) = oxidized [rubredoxin] + H2O2. Its function is as follows. Uses electrons from reduced NADP, by way of rubredoxin and an oxidoreductase, to catalyze the reduction of superoxide to hydrogen peroxide. The chain is Putative superoxide reductase from Archaeoglobus fulgidus (strain ATCC 49558 / DSM 4304 / JCM 9628 / NBRC 100126 / VC-16).